A 580-amino-acid chain; its full sequence is Long-chain-fatty-acid--AMP ligase FadD28 (580 aa).

The segment at serine 421–proline 440 is disordered.

It belongs to the ATP-dependent AMP-binding enzyme family.

It catalyses the reaction holo-[mycocerosate synthase] + a long-chain fatty acid + ATP = a long-chain fatty acyl-[mycocerosate synthase] + AMP + diphosphate. The enzyme catalyses a long-chain fatty acid + ATP + H(+) = a long-chain fatty acyl-AMP + diphosphate. It carries out the reaction holo-[mycocerosate synthase] + a long-chain fatty acyl-AMP = a long-chain fatty acyl-[mycocerosate synthase] + AMP + H(+). It participates in lipid metabolism; fatty acid biosynthesis. Involved in the biosynthesis of phthiocerol dimycocerosate (PDIM), a cell wall-associated lipid found only in pathogenic mycobacteria. Catalyzes the activation of long-chain fatty acids as acyl-adenylates (acyl-AMP), which are then transferred to the multifunctional polyketide synthase Mas for further chain extension. The sequence is that of Long-chain-fatty-acid--AMP ligase FadD28 (fadD28) from Mycobacterium tuberculosis (strain CDC 1551 / Oshkosh).